The chain runs to 101 residues: ATP-dependent Clp protease adapter protein ClpS (101 aa).

Belongs to the ClpS family. As to quaternary structure, binds to the N-terminal domain of the chaperone ClpA.

Involved in the modulation of the specificity of the ClpAP-mediated ATP-dependent protein degradation. The sequence is that of ATP-dependent Clp protease adapter protein ClpS from Clostridium acetobutylicum (strain ATCC 824 / DSM 792 / JCM 1419 / IAM 19013 / LMG 5710 / NBRC 13948 / NRRL B-527 / VKM B-1787 / 2291 / W).